The sequence spans 68 residues: Large ribosomal subunit protein uL30 (68 aa).

The protein belongs to the universal ribosomal protein uL30 family. Part of the 50S ribosomal subunit.

This is Large ribosomal subunit protein uL30 from Agrobacterium fabrum (strain C58 / ATCC 33970) (Agrobacterium tumefaciens (strain C58)).